Consider the following 127-residue polypeptide: Aspartate 1-decarboxylase (127 aa).

The active-site Schiff-base intermediate with substrate; via pyruvic acid is the Ser-25. Ser-25 carries the post-translational modification Pyruvic acid (Ser). Thr-57 contributes to the substrate binding site. Tyr-58 functions as the Proton donor in the catalytic mechanism. 73–75 (GAA) contacts substrate.

The protein belongs to the PanD family. Heterooctamer of four alpha and four beta subunits. Pyruvate is required as a cofactor. Is synthesized initially as an inactive proenzyme, which is activated by self-cleavage at a specific serine bond to produce a beta-subunit with a hydroxyl group at its C-terminus and an alpha-subunit with a pyruvoyl group at its N-terminus.

The protein localises to the cytoplasm. The enzyme catalyses L-aspartate + H(+) = beta-alanine + CO2. Its pathway is cofactor biosynthesis; (R)-pantothenate biosynthesis; beta-alanine from L-aspartate: step 1/1. Its function is as follows. Catalyzes the pyruvoyl-dependent decarboxylation of aspartate to produce beta-alanine. The polypeptide is Aspartate 1-decarboxylase (Listeria innocua serovar 6a (strain ATCC BAA-680 / CLIP 11262)).